The chain runs to 538 residues: Myeloid cell nuclear differentiation antigen-like protein (538 aa).

The region spanning 1–87 is the Pyrin domain; sequence MAEYKKIVLL…AKKLKTEKAK (87 aa). The segment at 120-306 is disordered; sequence SYKSVPSSKK…PQPQNQNIPR (187 aa). Composition is skewed to basic and acidic residues over residues 135–153 and 245–262; these read AKTE…DHLP and RREE…KEPD. The segment covering 276 to 305 has biased composition (low complexity); the sequence is SPILHSSSSASSNIPSATNQKPQPQNQNIP. Residues 299–499 form the HIN-200 domain; it reads PQNQNIPRGA…CGDHSFVKIK (201 aa).

Belongs to the HIN-200 family. In terms of tissue distribution, highest expression observed in spleen and thymus with moderate levels in bone marrow, lung, skin and heart, low levels in muscle, liver and intestine and little or no expression in brain and pancreas.

The protein resides in the nucleus. Suppresses cell growth when expressed ectopically. The protein is Myeloid cell nuclear differentiation antigen-like protein of Mus musculus (Mouse).